The chain runs to 213 residues: Macrodontain-1 (213 aa).

Cystine bridges form between cysteine 23-cysteine 63, cysteine 57-cysteine 96, and cysteine 153-cysteine 201. Cysteine 26 is a catalytic residue. Active-site residues include histidine 159 and asparagine 176.

In terms of assembly, monomer. Fruits.

Its activity is regulated as follows. Inhibited by the general cysteine protease inhibitor E64 (L-trans-epoxysuccinyl-leucylamide-(4-guanido)-butane). Cysteine protease that catalyzes the preferential cleavage: Ala-|-Xaa &gt; Gln-|-Xaa &gt; Tyr-Xaa &gt;&gt; Leu-|-Xaa &gt; Gly-|-Xaa. Hydrolyzes the synthetic peptide substrate Bz-Phe-Val-Arg-pNA. This is Macrodontain-1 from Ananas macrodontes (False pineapple).